The primary structure comprises 342 residues: (Lyso)-N-acylphosphatidylethanolamine lipase (342 aa).

The 255-residue stretch at 70 to 324 (PLVMVHGFGG…IEGASHHVYA (255 aa)) folds into the AB hydrolase-1 domain.

The protein belongs to the peptidase S33 family. ABHD4/ABHD5 subfamily.

The enzyme catalyses N-hexadecanoyl-1,2-di-(9Z-octadecenoyl)-sn-glycero-3-phosphoethanolamine + H2O = N-hexadecanoyl-1-(9Z-octadecenoyl)-sn-glycero-3-phosphoethanolamine + (9Z)-octadecenoate + H(+). It catalyses the reaction an N-acyl-1,2-diacyl-sn-glycero-3-phosphoethanolamine + H2O = N,1-diacyl-sn-glycero-3-phosphoethanolamine + a fatty acid + H(+). The catalysed reaction is N-hexadecanoyl-1-(9Z-octadecenoyl)-sn-glycero-3-phosphoethanolamine + H2O = N-hexadecanoyl-sn-glycero-3-phosphoethanolamine + (9Z)-octadecenoate + H(+). It carries out the reaction N-octadecanoyl-1-(9Z-octadecenoyl)-sn-glycero-3-phosphoethanolamine + H2O = N-octadecanoyl-sn-glycero-3-phospho-ethanolamine + (9Z)-octadecenoate + H(+). The enzyme catalyses N-eicosanoyl-1-(9Z-octadecenoyl)-sn-glycero-3-phosphoethanolamine + H2O = N-eicosanoyl-sn-glycero-3-phosphoethanolamine + (9Z)-octadecenoate + H(+). It catalyses the reaction N,1-di-(9Z-octadecenoyl)-sn-glycero-3-phosphoethanolamine + H2O = N-(9Z-octadecenoyl)-sn-glycero-3-phosphoethanolamine + (9Z)-octadecenoate + H(+). The catalysed reaction is N-(5Z,8Z,11Z,14Z-eicosatetraenoyl)-1-(9Z-octadecenoyl)-sn-glycero-3-phosphoethanolamine + H2O = N-(5Z,8Z,11Z,14Z-eicosatetraenoyl)-sn-glycero-3-phosphoethanolamine + (9Z)-octadecenoate + H(+). It carries out the reaction 1-octadecanoyl-2-(9Z-octadecenoyl)-sn-glycero-3-phospho-(N-hexadecanoyl)-serine + H2O = 1-octadecanoyl-2-hydroxy-sn-glycero-3-phospho-(N-hexadecanoyl)-serine + (9Z)-octadecenoate + H(+). The enzyme catalyses 1-O-(1Z-octadecenoyl)-2-(9Z-octadecenoyl)-sn-glycero-3-phospho-N-hexadecanoyl-ethanolamine + H2O = 1-O-(1Z-octadecenyl)-sn-glycero-3-phospho-N-hexadecanoyl-ethanolamine + (9Z)-octadecenoate + H(+). It catalyses the reaction N,1-diacyl-sn-glycero-3-phosphoethanolamine + H2O = N-acyl-sn-glycero-3-phosphoethanolamine + a fatty acid + H(+). Its function is as follows. Lysophospholipase selective for N-acyl phosphatidylethanolamine (NAPE). Contributes to the biosynthesis of N-acyl ethanolamines, including the endocannabinoid anandamide by hydrolyzing the sn-1 and sn-2 acyl chains from N-acyl phosphatidylethanolamine (NAPE) generating glycerophospho-N-acyl ethanolamine (GP-NAE), an intermediate for N-acyl ethanolamine biosynthesis. Hydrolyzes substrates bearing saturated, monounsaturated, polyunsaturated N-acyl chains. Shows no significant activity towards other lysophospholipids, including lysophosphatidylcholine, lysophosphatidylethanolamine and lysophosphatidylserine. The sequence is that of (Lyso)-N-acylphosphatidylethanolamine lipase from Bos taurus (Bovine).